The chain runs to 334 residues: Leucine-rich repeat-containing protein 39 (334 aa).

The stretch at 10–47 (AVNAVKEVWEKRIKKLNEDLKREKEFQQKLVRIWEERV) forms a coiled coil. 9 LRR repeats span residues 84 to 105 (QLQEWQLHRIGLLKIPEFIGRF), 107 to 128 (NLIVLDLSRNTITEIPRGIGLL), 130 to 151 (RLQELILSYNRIKTVPMELSYC), 153 to 176 (SLEKLELAVNRDISDLPQELSNLL), 177 to 198 (KLTHLDLSMNLFTTIPPAVLNM), 200 to 221 (ALEWLDMGSNRLEQLPDTIERM), 223 to 244 (NLHTLWLQRNEITCLPETISSM), 246 to 267 (NLSTLVLSNNKLQDIPVCMEKM), and 269 to 290 (NLRFVNFRDNPLKLEVTLPPSE).

Interacts with MYH7 (via C-terminus).

It localises to the cytoplasm. Its subcellular location is the myofibril. The protein resides in the sarcomere. It is found in the m line. Functionally, component of the sarcomeric M-band which plays a role in myocyte response to biomechanical stress. May regulate expression of other M-band proteins via an SRF-dependent pathway. Important for normal contractile function in heart. This Bos taurus (Bovine) protein is Leucine-rich repeat-containing protein 39.